A 154-amino-acid chain; its full sequence is Putative F-box protein At2g11200 (154 aa).

In terms of domain architecture, F-box spans 5-51 (TTAMSDLPRDLEEEVLSRVQLASLRAVRTTCKKWNRRLSKYRFTKKY).

The protein is Putative F-box protein At2g11200 of Arabidopsis thaliana (Mouse-ear cress).